A 449-amino-acid polypeptide reads, in one-letter code: Glutamyl-tRNA reductase (449 aa).

Substrate is bound by residues 49–52 (TCNR), Ser-109, 114–116 (ETQ), and Gln-120. The active-site Nucleophile is the Cys-50. 189–194 (GAGKMS) lines the NADP(+) pocket. The disordered stretch occupies residues 427–449 (NFTHPREEMEESDEKRSYCGESR).

It belongs to the glutamyl-tRNA reductase family. As to quaternary structure, homodimer.

The enzyme catalyses (S)-4-amino-5-oxopentanoate + tRNA(Glu) + NADP(+) = L-glutamyl-tRNA(Glu) + NADPH + H(+). The protein operates within porphyrin-containing compound metabolism; protoporphyrin-IX biosynthesis; 5-aminolevulinate from L-glutamyl-tRNA(Glu): step 1/2. Its function is as follows. Catalyzes the NADPH-dependent reduction of glutamyl-tRNA(Glu) to glutamate 1-semialdehyde (GSA). In Carboxydothermus hydrogenoformans (strain ATCC BAA-161 / DSM 6008 / Z-2901), this protein is Glutamyl-tRNA reductase.